Consider the following 348-residue polypeptide: Glucan endo-1,3-beta-glucosidase, basic isoform (348 aa).

A Pyrrolidone carboxylic acid modification is found at Gln-1. The active-site Proton donor is the Glu-95. Glu-240 acts as the Nucleophile in catalysis. Positions 317-348 are cleaved as a propeptide — removed in mature form; sequence AQRMQRLLLMSSMQHIPLRVTCKLEPSSQSLL.

Belongs to the glycosyl hydrolase 17 family.

Its subcellular location is the vacuole. The catalysed reaction is Hydrolysis of (1-&gt;3)-beta-D-glucosidic linkages in (1-&gt;3)-beta-D-glucans.. Implicated in the defense of plants against pathogens. The sequence is that of Glucan endo-1,3-beta-glucosidase, basic isoform from Phaseolus vulgaris (Kidney bean).